A 124-amino-acid polypeptide reads, in one-letter code: Large ribosomal subunit protein uL18 (124 aa).

This sequence belongs to the universal ribosomal protein uL18 family. In terms of assembly, part of the 50S ribosomal subunit; part of the 5S rRNA/L5/L18/L25 subcomplex. Contacts the 5S and 23S rRNAs.

Its function is as follows. This is one of the proteins that bind and probably mediate the attachment of the 5S RNA into the large ribosomal subunit, where it forms part of the central protuberance. The chain is Large ribosomal subunit protein uL18 from Aquifex pyrophilus.